The primary structure comprises 293 residues: Plant cysteine oxidase 1 (293 aa).

Residues His-148, His-150, and His-211 each coordinate Fe cation. The segment at 250 to 293 (SEDDDVLSSEEEKEGYAWLQERDDNPEDHTNVVGALYRGPKVED) is disordered. Acidic residues predominate over residues 251-262 (EDDDVLSSEEEK). Residues 269–279 (QERDDNPEDHT) are compositionally biased toward basic and acidic residues.

Belongs to the cysteine dioxygenase family. Fe(2+) is required as a cofactor.

It localises to the nucleus. The protein localises to the cytoplasm. The enzyme catalyses L-cysteine + O2 = 3-sulfino-L-alanine + H(+). In terms of biological role, catalyzes the oxidation of N-terminal cysteine residues (N-Cys), thus preparing the protein for N-end rule pathway-mediated proteasomal degradation, upstream of the N-end rule enzymes ATE1, ATE2 and PRT6. Controls the preparation of the group VII ethylene response factor (ERF-VII) proteins for degradation via the 26S proteasome N-end rule pathway. Acts as an oxygen sensor that controls the stability of ERF-VII proteins, which are stabilized in flooding-induced hypoxia, and regulate transcriptional adaptation to these adverse conditions. Not active on Cys located inside or at the C-terminus of a peptide. Acts redundantly with PCO2 to repress the anaerobic response. This chain is Plant cysteine oxidase 1, found in Arabidopsis thaliana (Mouse-ear cress).